Consider the following 236-residue polypeptide: Uridylate kinase (236 aa).

Residue 12–15 (KLSG) participates in ATP binding. Residues 20 to 25 (GEKGFG) are involved in allosteric activation by GTP. G54 provides a ligand contact to UMP. Residues G55 and R59 each contribute to the ATP site. UMP-binding positions include D72 and 133 to 140 (TGNPYFST). Positions 161, 166, and 169 each coordinate ATP.

Belongs to the UMP kinase family. In terms of assembly, homohexamer.

It localises to the cytoplasm. The enzyme catalyses UMP + ATP = UDP + ADP. It functions in the pathway pyrimidine metabolism; CTP biosynthesis via de novo pathway; UDP from UMP (UMPK route): step 1/1. Its activity is regulated as follows. Allosterically activated by GTP. Inhibited by UTP. Functionally, catalyzes the reversible phosphorylation of UMP to UDP. This Alkaliphilus metalliredigens (strain QYMF) protein is Uridylate kinase.